A 375-amino-acid polypeptide reads, in one-letter code: DnaJ homolog subfamily B member 12 (375 aa).

M1 is subject to N-acetylmethionine. At 1 to 243 (MESNKDEAER…DRRDNQGDGG (243 aa)) the chain is on the cytoplasmic side. The interval 45-92 (ALIESLNQKPQTAGDQPPPTDTTHATHRKAGGTDAPSANGEAGGESTK) is disordered. Over residues 49–58 (SLNQKPQTAG) the composition is skewed to polar residues. In terms of domain architecture, J spans 112-176 (YEILGVSRGA…RKQYDQFGDD (65 aa)). H185 carries the post-translational modification Pros-methylhistidine. A helical membrane pass occupies residues 244–264 (LGVFVQLMPILILILVSALSQ). The Lumenal segment spans residues 265-375 (LMVSSPPYSL…LSEVQASLHG (111 aa)).

It belongs to the DnaJ family. DNAJB12/DNAJB14 subfamily. Homodimer and homotetramer. Interacts (via J domain) with HSPA8/Hsc70. Forms a multiprotein complex, at least composed of DNAJB12, DNAJB14, HSPA8/Hsc70 and SGTA; interaction with DNAJB14 and HSPA8/Hsc70 is direct. Post-translationally, methylated at His-185 by METTL9.

The protein localises to the endoplasmic reticulum membrane. It is found in the nucleus membrane. Its function is as follows. Acts as a co-chaperone with HSPA8/Hsc70; required to promote protein folding and trafficking, prevent aggregation of client proteins, and promote unfolded proteins to endoplasmic reticulum-associated degradation (ERAD) pathway. Acts by determining HSPA8/Hsc70's ATPase and polypeptide-binding activities. Can also act independently of HSPA8/Hsc70: together with DNAJB14, acts as a chaperone that promotes maturation of potassium channels KCND2 and KCNH2 by stabilizing nascent channel subunits and assembling them into tetramers. While stabilization of nascent channel proteins is dependent on HSPA8/Hsc70, the process of oligomerization of channel subunits is independent of HSPA8/Hsc70. When overexpressed, forms membranous structures together with DNAJB14 and HSPA8/Hsc70 within the nucleus; the role of these structures, named DJANGOs, is still unclear. (Microbial infection) In case of infection by polyomavirus, involved in the virus endoplasmic reticulum membrane penetration and infection. This chain is DnaJ homolog subfamily B member 12, found in Homo sapiens (Human).